The following is a 295-amino-acid chain: MSEAQSELQASLLAKALPYMQRYENKTIVVKYGGHAMGNAELGKAFAADIALLKQSGVNPIVVHGGGPQIGAMLTKMGIESKFEGGLRVTDQKTVEIVEMVLAGSINKEIVALINQTGEWAIGLCGKDGNMVFAEKAHKTIKDPDSNIERVLDLGFVGEVVEVDRTLLDLLAKSEMIPVIAPVAPGRDGATYNINADTFAGAIAGALSATRLLFLTDVPGVLDKQGQLIKELSVAQAHALIADGTISGGMIPKVETCIDAIKAGVQGVVILNGKTAHSVLLEIFTEHGAGTLIVP.

Substrate contacts are provided by residues 66–67, arginine 88, and asparagine 193; that span reads GG.

This sequence belongs to the acetylglutamate kinase family. ArgB subfamily.

It localises to the cytoplasm. The catalysed reaction is N-acetyl-L-glutamate + ATP = N-acetyl-L-glutamyl 5-phosphate + ADP. Its pathway is amino-acid biosynthesis; L-arginine biosynthesis; N(2)-acetyl-L-ornithine from L-glutamate: step 2/4. In terms of biological role, catalyzes the ATP-dependent phosphorylation of N-acetyl-L-glutamate. This chain is Acetylglutamate kinase, found in Rhizobium rhizogenes (strain K84 / ATCC BAA-868) (Agrobacterium radiobacter).